The following is a 134-amino-acid chain: Profilin-2 (134 aa).

A disulfide bond links cysteine 13 and cysteine 118. The Involved in PIP2 interaction signature appears at 84–100; sequence AVIRGKKGSGGITIKKT. Phosphothreonine is present on threonine 114.

Belongs to the profilin family. In terms of processing, phosphorylated by MAP kinases.

The protein resides in the cytoplasm. It is found in the cytoskeleton. The chain is Profilin-2 from Olea europaea (Common olive).